The chain runs to 96 residues: Protein RnfH (96 aa).

This sequence belongs to the UPF0125 (RnfH) family.

This chain is Protein RnfH, found in Escherichia coli O17:K52:H18 (strain UMN026 / ExPEC).